We begin with the raw amino-acid sequence, 615 residues long: Zinc finger protein 653 (615 aa).

Disordered regions lie at residues 1–46 (MAER…ARRR), 93–115 (RSGR…KRRR), and 174–235 (PLSD…SGLI). A compositionally biased stretch (low complexity) spans 7–25 (EPGAEAEAGAGGEAAAEEG). Positions 106-115 (KKPKRKKRRR) are enriched in basic residues. Low complexity-rich tracts occupy residues 192 to 203 (GSSDSSSSGSSS) and 212 to 232 (QPAK…TGSS). C2H2-type zinc fingers lie at residues 467–492 (FHCP…NLVH), 498–522 (KVCP…MIIH), 528–550 (FTCE…RRTH), 556–578 (LQCE…MKKH), and 586–609 (FTCD…LKSH).

It belongs to the krueppel C2H2-type zinc-finger protein family. In terms of assembly, interacts with NR5A1. As to expression, highly expressed in testis and spleen. Moderately expressed in lung, adrenal gland, uterus, and ovary. Very low expression in pancreas, heart, skeletal muscle, adipose tissue, kidney, and liver.

The protein resides in the nucleus. In terms of biological role, transcriptional repressor. May repress NR5A1, PPARG, NR1H3, NR4A2, ESR1 and NR3C1 transcriptional activity. The sequence is that of Zinc finger protein 653 (Znf653) from Mus musculus (Mouse).